Reading from the N-terminus, the 401-residue chain is Nicotinate phosphoribosyltransferase (401 aa).

H221 carries the phosphohistidine; by autocatalysis modification.

Belongs to the NAPRTase family. Post-translationally, transiently phosphorylated on a His residue during the reaction cycle. Phosphorylation strongly increases the affinity for substrates and increases the rate of nicotinate D-ribonucleotide production. Dephosphorylation regenerates the low-affinity form of the enzyme, leading to product release.

The catalysed reaction is nicotinate + 5-phospho-alpha-D-ribose 1-diphosphate + ATP + H2O = nicotinate beta-D-ribonucleotide + ADP + phosphate + diphosphate. Its pathway is cofactor biosynthesis; NAD(+) biosynthesis; nicotinate D-ribonucleotide from nicotinate: step 1/1. Its function is as follows. Catalyzes the synthesis of beta-nicotinate D-ribonucleotide from nicotinate and 5-phospho-D-ribose 1-phosphate at the expense of ATP. The chain is Nicotinate phosphoribosyltransferase from Edwardsiella ictaluri (strain 93-146).